Here is a 292-residue protein sequence, read N- to C-terminus: uncharacterized protein (292 aa).

Residues leucine 66–proline 86 form a helical membrane-spanning segment.

Its subcellular location is the host membrane. This is an uncharacterized protein from Alcelaphine herpesvirus 1 (strain C500) (AlHV-1).